The chain runs to 147 residues: Flagellar assembly factor FliW (147 aa).

This sequence belongs to the FliW family. As to quaternary structure, interacts with translational regulator CsrA and flagellin(s).

It localises to the cytoplasm. Its function is as follows. Acts as an anti-CsrA protein, binds CsrA and prevents it from repressing translation of its target genes, one of which is flagellin. Binds to flagellin and participates in the assembly of the flagellum. This Treponema denticola (strain ATCC 35405 / DSM 14222 / CIP 103919 / JCM 8153 / KCTC 15104) protein is Flagellar assembly factor FliW.